A 511-amino-acid polypeptide reads, in one-letter code: MVPSFLSLSFSSLGLWASGLILVLGFLKLIHLLLRRQTLAKAMDKFPGPPTHWLFGHALEIQETGSLDKVVSWAHQFPYAHPLWFGQFIGFLNIYEPDYAKAVYSRGDPKAPDVYDFFLQWIGRGLLVLEGPKWLQHRKLLTPGFHYDVLKPYVAVFTESTRIMLDKWEEKAREGKSFDIFCDVGHMALNTLMKCTFGRGDTGLGHRDSSYYLAVSDLTLLMQQRLVSFQYHNDFIYWLTPHGRRFLRACQVAHDHTDQVIRERKAALQDEKVRKKIQNRRHLDFLDILLGARDEDDIKLSDADLRAEVDTFMFEGHDTTTSGISWFLYCMALYPEHQHRCREEVREILGDQDFFQWDDLGKMTYLTMCIKESFRLYPPVPQVYRQLSKPVTFVDGRSLPAGSLISMHIYALHRNSAVWPDPEVFDSLRFSTENASKRHPFAFMPFSAGPRNCIGQQFAMSEMKVVTAMCLLRFEFSLDPSRLPIKMPQLVLRSKNGFHLHLKPLGPGSGK.

Glu315 contributes to the heme binding site. Residue Ser436 is modified to Phosphoserine. A heme-binding site is contributed by Cys453.

It belongs to the cytochrome P450 family. Heme is required as a cofactor. As to expression, detected in the liver and lung (at protein level).

The protein resides in the endoplasmic reticulum membrane. Its subcellular location is the microsome membrane. The enzyme catalyses an organic molecule + reduced [NADPH--hemoprotein reductase] + O2 = an alcohol + oxidized [NADPH--hemoprotein reductase] + H2O + H(+). Functionally, cytochromes P450 are a group of heme-thiolate monooxygenases. In liver microsomes, this enzyme is involved in an NADPH-dependent electron transport pathway. It oxidizes a variety of structurally unrelated compounds, including steroids, fatty acids, and xenobiotics. This chain is Cytochrome P450 4B1 (CYP4B1), found in Homo sapiens (Human).